We begin with the raw amino-acid sequence, 190 residues long: Holliday junction branch migration complex subunit RuvA (190 aa).

Positions 1-64 (MIGRITGTLI…EDAHILYGFA (64 aa)) are domain I. Residues 65–137 (TAAERGAFRE…MRGKLGADIG (73 aa)) form a domain II region. The interval 137–141 (GATAH) is flexible linker. A domain III region spans residues 142 to 190 (AVPDSQTDILNALLALGYSDKESQAALKKLPEGTGVSEGIRLALKALVR).

This sequence belongs to the RuvA family. As to quaternary structure, homotetramer. Forms an RuvA(8)-RuvB(12)-Holliday junction (HJ) complex. HJ DNA is sandwiched between 2 RuvA tetramers; dsDNA enters through RuvA and exits via RuvB. An RuvB hexamer assembles on each DNA strand where it exits the tetramer. Each RuvB hexamer is contacted by two RuvA subunits (via domain III) on 2 adjacent RuvB subunits; this complex drives branch migration. In the full resolvosome a probable DNA-RuvA(4)-RuvB(12)-RuvC(2) complex forms which resolves the HJ.

Its subcellular location is the cytoplasm. Its function is as follows. The RuvA-RuvB-RuvC complex processes Holliday junction (HJ) DNA during genetic recombination and DNA repair, while the RuvA-RuvB complex plays an important role in the rescue of blocked DNA replication forks via replication fork reversal (RFR). RuvA specifically binds to HJ cruciform DNA, conferring on it an open structure. The RuvB hexamer acts as an ATP-dependent pump, pulling dsDNA into and through the RuvAB complex. HJ branch migration allows RuvC to scan DNA until it finds its consensus sequence, where it cleaves and resolves the cruciform DNA. This Bordetella petrii (strain ATCC BAA-461 / DSM 12804 / CCUG 43448) protein is Holliday junction branch migration complex subunit RuvA.